Reading from the N-terminus, the 187-residue chain is Protein GrpE (187 aa).

Basic and acidic residues predominate over residues 1–15 (MKETKQEEMEVREDC). The segment at 1–40 (MKETKQEEMEVREDCESVDSNLEATVEEMESTKGTSEDLE) is disordered.

The protein belongs to the GrpE family. As to quaternary structure, homodimer.

The protein resides in the cytoplasm. Its function is as follows. Participates actively in the response to hyperosmotic and heat shock by preventing the aggregation of stress-denatured proteins, in association with DnaK and GrpE. It is the nucleotide exchange factor for DnaK and may function as a thermosensor. Unfolded proteins bind initially to DnaJ; upon interaction with the DnaJ-bound protein, DnaK hydrolyzes its bound ATP, resulting in the formation of a stable complex. GrpE releases ADP from DnaK; ATP binding to DnaK triggers the release of the substrate protein, thus completing the reaction cycle. Several rounds of ATP-dependent interactions between DnaJ, DnaK and GrpE are required for fully efficient folding. The polypeptide is Protein GrpE (Alkaliphilus oremlandii (strain OhILAs) (Clostridium oremlandii (strain OhILAs))).